Reading from the N-terminus, the 331-residue chain is Adenosine deaminase (331 aa).

Residues histidine 12 and histidine 14 each contribute to the Zn(2+) site. Residues histidine 14, aspartate 16, and glycine 170 each coordinate substrate. Histidine 197 serves as a coordination point for Zn(2+). Catalysis depends on glutamate 200, which acts as the Proton donor. Aspartate 278 serves as a coordination point for Zn(2+).

Belongs to the metallo-dependent hydrolases superfamily. Adenosine and AMP deaminases family. Adenosine deaminase subfamily. The cofactor is Zn(2+).

It catalyses the reaction adenosine + H2O + H(+) = inosine + NH4(+). It carries out the reaction 2'-deoxyadenosine + H2O + H(+) = 2'-deoxyinosine + NH4(+). In terms of biological role, catalyzes the hydrolytic deamination of adenosine and 2-deoxyadenosine. This chain is Adenosine deaminase, found in Vibrio vulnificus (strain CMCP6).